Here is a 425-residue protein sequence, read N- to C-terminus: [Pyruvate dehydrogenase (acetyl-transferring)] kinase, mitochondrial (425 aa).

At His-178 the chain carries Phosphohistidine; by autocatalysis. In terms of domain architecture, Histidine kinase spans 180-418 (NVAVEIALDI…DVYIHLNRLC (239 aa)). ATP is bound by residues 296–303 (EILKNSLR), Asp-336, 355–356 (TT), and 379–384 (GFGFGL).

The protein belongs to the PDK/BCKDK protein kinase family.

The protein localises to the mitochondrion matrix. It catalyses the reaction L-seryl-[pyruvate dehydrogenase E1 alpha subunit] + ATP = O-phospho-L-seryl-[pyruvate dehydrogenase E1 alpha subunit] + ADP + H(+). In terms of biological role, inhibits the mitochondrial pyruvate dehydrogenase complex by phosphorylation of the E1 alpha subunit, thus contributing to the regulation of glucose metabolism. The sequence is that of [Pyruvate dehydrogenase (acetyl-transferring)] kinase, mitochondrial (pkp1) from Schizosaccharomyces pombe (strain 972 / ATCC 24843) (Fission yeast).